The chain runs to 455 residues: Ribulose bisphosphate carboxylase large chain (455 aa).

At K5 the chain carries N6,N6,N6-trimethyllysine. The substrate site is built by N114 and T164. The active-site Proton acceptor is the K166. Substrate is bound at residue K168. Mg(2+) contacts are provided by K192, D194, and E195. At K192 the chain carries N6-carboxylysine. Catalysis depends on H285, which acts as the Proton acceptor. The substrate site is built by R286, H318, and S370.

The protein belongs to the RuBisCO large chain family. Type I subfamily. In terms of assembly, heterohexadecamer of 8 large chains and 8 small chains; disulfide-linked. The disulfide link is formed within the large subunit homodimers. It depends on Mg(2+) as a cofactor. The disulfide bond which can form in the large chain dimeric partners within the hexadecamer appears to be associated with oxidative stress and protein turnover.

The protein resides in the plastid. It localises to the chloroplast. The enzyme catalyses 2 (2R)-3-phosphoglycerate + 2 H(+) = D-ribulose 1,5-bisphosphate + CO2 + H2O. The catalysed reaction is D-ribulose 1,5-bisphosphate + O2 = 2-phosphoglycolate + (2R)-3-phosphoglycerate + 2 H(+). Its function is as follows. RuBisCO catalyzes two reactions: the carboxylation of D-ribulose 1,5-bisphosphate, the primary event in carbon dioxide fixation, as well as the oxidative fragmentation of the pentose substrate in the photorespiration process. Both reactions occur simultaneously and in competition at the same active site. The protein is Ribulose bisphosphate carboxylase large chain of Lupinus arcticus (Arctic lupine).